We begin with the raw amino-acid sequence, 464 residues long: Argininosuccinate lyase (464 aa).

Belongs to the lyase 1 family. Argininosuccinate lyase subfamily.

It is found in the cytoplasm. The enzyme catalyses 2-(N(omega)-L-arginino)succinate = fumarate + L-arginine. The protein operates within amino-acid biosynthesis; L-arginine biosynthesis; L-arginine from L-ornithine and carbamoyl phosphate: step 3/3. The sequence is that of Argininosuccinate lyase from Moorella thermoacetica (strain ATCC 39073 / JCM 9320).